The chain runs to 419 residues: Odorant receptor 56a (419 aa).

Over 1–41 (MFKVKDLLLSPTTFEDPIFGTHLRYFQWYGYVASKDQNRPL) the chain is Cytoplasmic. A helical transmembrane segment spans residues 42–62 (LSLIRCTILTASIWLSCALML). Topologically, residues 63–76 (ARVFRGYENLNDGA) are extracellular. The chain crosses the membrane as a helical span at residues 77–97 (TSYATAVQYFAVSIAMFNAYV). The Cytoplasmic portion of the chain corresponds to 98 to 137 (QRDKVISLLRVAHSDIQNLMHEADNREMELLVATQAYTRT). The helical transmembrane segment at 138–158 (ITLLIWIPSVIAGLMAYSDCI) threads the bilayer. Over 159-196 (YRSLFLPKSVFNVPAVRRGEEHPILLFQLFPFGELCDN) the chain is Extracellular. Residues 197-217 (FVVGYLGPWYALGLGITAIPL) form a helical membrane-spanning segment. Topologically, residues 218 to 292 (WHTFITCLMK…FVQELQYLIC (75 aa)) are cytoplasmic. A helical transmembrane segment spans residues 293-313 (VPVMADFIIFSVLICFLFFAL). Residues 314-323 (TVGVPSKMDY) are Extracellular-facing. A helical transmembrane segment spans residues 324-344 (FFMFIYLFVMAGILWIYHWHA). Residues 345-389 (TLIVECHDELSLAYFSCGWYNFEMPLQKMLVFMMMHAQRPMKMRA) are Cytoplasmic-facing. Residues 390 to 410 (LLVDLNLRTFIDIGRGAYSYF) form a helical membrane-spanning segment. Residues 411–419 (NLLRSSHLY) are Extracellular-facing.

Belongs to the insect chemoreceptor superfamily. Heteromeric odorant receptor channel (TC 1.A.69) family. Or30a subfamily. Interacts with Orco. Complexes exist early in the endomembrane system in olfactory sensory neurons (OSNs), coupling these complexes to the conserved ciliary trafficking pathway. Expressed in olfactory sensory neurons in the antenna.

The protein resides in the cell membrane. In terms of biological role, odorant receptor which mediates acceptance or avoidance behavior, depending on its substrates. The odorant receptor repertoire encodes a large collection of odor stimuli that vary widely in identity, intensity, and duration. May form a complex with Orco to form odorant-sensing units, providing sensitive and prolonged odorant signaling and calcium permeability. Specific receptor for geosmin, a microbial odorant that constitutes an ecologically relevant stimulus that alerts flies to the presence of harmful microbes and induces avoidance behavior. The sequence is that of Odorant receptor 56a (Or56a) from Drosophila melanogaster (Fruit fly).